An 84-amino-acid chain; its full sequence is Metallothionein type 2b (84 aa).

This sequence belongs to the metallothionein superfamily. Type 15 family. As to expression, expressed in leaves, stems and roots.

The protein resides in the cytoplasm. It is found in the nucleus. Metallothioneins have a high content of cysteine residues that bind various heavy metals. Probably involved in maintaining homeostasis of essential transition metals and detoxification of toxic metals. Increases cadmium and zinc tolerance when expressed in heterologous systems. Metal chelator binding 6 cadmium or 5 zinc atoms per protein. The polypeptide is Metallothionein type 2b (Colocasia esculenta (Wild taro)).